The sequence spans 314 residues: Mitochondrial thiamine pyrophosphate carrier 1 (314 aa).

6 consecutive transmembrane segments (helical) span residues 14–30 (VAAW…GLLA), 84–100 (LLYV…YSLF), 116–136 (LVVG…FDVL), 170–186 (GSIA…SIMF), 217–233 (SAGT…TFPL), and 285–302 (GILV…VSFW). Solcar repeat units lie at residues 14 to 103 (VAAW…FNRY), 110 to 195 (EARL…IRIY), and 210 to 310 (ELAT…AIHY).

It belongs to the mitochondrial carrier (TC 2.A.29) family.

The protein localises to the mitochondrion inner membrane. In terms of biological role, mitochondrial transporter that mediates uptake of thiamine pyrophosphate (ThPP) into mitochondria. In Saccharomyces cerevisiae (strain YJM789) (Baker's yeast), this protein is Mitochondrial thiamine pyrophosphate carrier 1 (TPC1).